The chain runs to 281 residues: Cell growth regulator with EF hand domain protein 1 (281 aa).

The first 21 residues, 1–21 (MSRWLMQMLMLPLLLLPLGQA), serve as a signal peptide directing secretion. 2 consecutive EF-hand domains span residues 71–106 (NREQ…ALAP) and 115–150 (PVIL…APKR). Residues Asp-84, Asp-86, Asn-88, Gln-90, Glu-95, Asp-128, Asp-130, Asp-132, and Glu-139 each coordinate Ca(2+). The segment at 146 to 281 (EAPKRAESLP…HSIQLENDEI (136 aa)) is disordered. A compositionally biased stretch (polar residues) spans 169 to 184 (LLANSPLQSETQQSLG). Over residues 185 to 213 (TKEEITSQVEAKRALEPEQEAGHHIETKV) the composition is skewed to basic and acidic residues. Phosphoserine is present on residues Ser-217 and Ser-228. The segment covering 234 to 256 (GPREDAERQVESKDNEGEAKDLP) has biased composition (basic and acidic residues).

Probably digested extracellularly by an unknown serine protease generating extremely hydrophobic bioactive peptides. As to expression, expressed predominantly in whole brain and kidney, with limited expression in heart, lung, liver, and skeletal muscle and no expression in spleen and testis. Also expressed in pituitary gland, adrenal gland, digestive tract, and reproductive organs.

It is found in the secreted. In terms of biological role, mediates cell-cell adhesion in a calcium-dependent manner. Able to inhibit growth in several cell lines. This is Cell growth regulator with EF hand domain protein 1 from Rattus norvegicus (Rat).